The sequence spans 369 residues: Cytochrome b561 and DOMON domain-containing protein At3g07570 (369 aa).

The signal sequence occupies residues 1-22 (MKLYSVSIIIFVLIALSTIVNA). One can recognise a DOMON domain in the interval 55 to 167 (QNFILRYART…PRQSLLYAVG (113 aa)). Residues 174-369 (SSPDFRLREH…GLEVRKFLKK (196 aa)) form the Cytochrome b561 domain. A helical membrane pass occupies residues 212-232 (THGLMNMFGWGILIIVGAIVA). 2 residues coordinate heme b: His-213 and His-246. 2 helical membrane-spanning segments follow: residues 247–267 (IALQ…GLVL) and 279–299 (HKGL…ALLA). Heme b contacts are provided by His-279 and His-315. Helical transmembrane passes span 321-341 (LLII…KAGT) and 343-363 (WNGG…GLEV).

Requires heme b as cofactor.

Its subcellular location is the membrane. Its function is as follows. May act as a catecholamine-responsive trans-membrane electron transporter. This Arabidopsis thaliana (Mouse-ear cress) protein is Cytochrome b561 and DOMON domain-containing protein At3g07570.